The sequence spans 274 residues: NADH-ubiquinone oxidoreductase chain 2 (274 aa).

8 helical membrane passes run 28–48 (MIIMSALLLKSGAAPFHFWFP), 54–74 (LTWMNALVLMTWQKIAPLMLI), 79–99 (IKYLLLISVILSVIIGAIGGL), 107–127 (LMAFSSINHLGWMLSSLMISE), 128–148 (SIWLIYFFFYSFLSFVLTFMF), 171–191 (FTLFMNFLSLGGLPPFLGFLP), 206–226 (FLLLLMMMSTLITLFFYLRIC), and 254–274 (LIMTFFSIFGLFMISLFYFMF).

Belongs to the complex I subunit 2 family.

It is found in the mitochondrion inner membrane. The enzyme catalyses a ubiquinone + NADH + 5 H(+)(in) = a ubiquinol + NAD(+) + 4 H(+)(out). In terms of biological role, core subunit of the mitochondrial membrane respiratory chain NADH dehydrogenase (Complex I) that is believed to belong to the minimal assembly required for catalysis. Complex I functions in the transfer of electrons from NADH to the respiratory chain. The immediate electron acceptor for the enzyme is believed to be ubiquinone. The chain is NADH-ubiquinone oxidoreductase chain 2 (mt:ND2) from Drosophila mauritiana (Fruit fly).